A 528-amino-acid polypeptide reads, in one-letter code: Glucans biosynthesis protein G 2 (528 aa).

Residues 1–44 (MRLHLTFNHSTPATGRKNTKHTLFFGSMLACIISIISLVVPAYG) form the signal peptide.

The protein belongs to the OpgD/OpgG family.

It localises to the periplasm. It functions in the pathway glycan metabolism; osmoregulated periplasmic glucan (OPG) biosynthesis. Involved in the biosynthesis of osmoregulated periplasmic glucans (OPGs). This is Glucans biosynthesis protein G 2 (opgG2) from Shewanella oneidensis (strain ATCC 700550 / JCM 31522 / CIP 106686 / LMG 19005 / NCIMB 14063 / MR-1).